Consider the following 464-residue polypeptide: DNA repair protein KRE29 (464 aa).

Residues 1-69 form a disordered region; the sequence is MGSVNSSPNE…SDEEFSSLEN (69 aa). Residues 53–65 show a composition bias toward acidic residues; sequence PENDSLNSDEEFS. A phosphoserine mark is found at Ser-81 and Ser-101.

Component of the Smc5-Smc6 complex which consists of KRE29, MMS21, NSE1, NSE3, NSE4, NSE5, SMC5 and SMC6. Interacts with NSE5.

The protein resides in the nucleus. It localises to the cytoplasm. Functionally, acts in a DNA repair pathway for removal of UV-induced DNA damage that is distinct from classical nucleotide excision repair and in repair of ionizing radiation damage. Functions in homologous recombination repair of DNA double strand breaks and in recovery of stalled replication forks. This is DNA repair protein KRE29 (KRE29) from Saccharomyces cerevisiae (strain ATCC 204508 / S288c) (Baker's yeast).